A 76-amino-acid polypeptide reads, in one-letter code: Attractin (76 aa).

The first 18 residues, 1 to 18 (MKVAIIILSLALVAAVFA), serve as a signal peptide directing secretion. 3 disulfides stabilise this stretch: Cys-22–Cys-59, Cys-31–Cys-51, and Cys-38–Cys-44. An N-linked (GlcNAc...) asparagine glycan is attached at Asn-26.

Binds to temptin and enticin. Produced by the albumen gland of the egg cordons.

It is found in the secreted. In terms of biological role, water-borne pheromone that attract the marine mollusk Aplysia into breeding aggregations and coordinate male and female reproductive behavior within the aggregation. This chain is Attractin (ATT), found in Aplysia californica (California sea hare).